A 475-amino-acid chain; its full sequence is Glycogen synthase (475 aa).

Position 15 (Lys15) interacts with ADP-alpha-D-glucose.

It belongs to the glycosyltransferase 1 family. Bacterial/plant glycogen synthase subfamily.

It carries out the reaction [(1-&gt;4)-alpha-D-glucosyl](n) + ADP-alpha-D-glucose = [(1-&gt;4)-alpha-D-glucosyl](n+1) + ADP + H(+). It functions in the pathway glycan biosynthesis; glycogen biosynthesis. In terms of biological role, synthesizes alpha-1,4-glucan chains using ADP-glucose. The protein is Glycogen synthase of Chlamydia caviae (strain ATCC VR-813 / DSM 19441 / 03DC25 / GPIC) (Chlamydophila caviae).